The sequence spans 459 residues: Argininosuccinate lyase (459 aa).

It belongs to the lyase 1 family. Argininosuccinate lyase subfamily.

The protein resides in the cytoplasm. It carries out the reaction 2-(N(omega)-L-arginino)succinate = fumarate + L-arginine. It participates in amino-acid biosynthesis; L-arginine biosynthesis; L-arginine from L-ornithine and carbamoyl phosphate: step 3/3. This Geobacillus thermodenitrificans (strain NG80-2) protein is Argininosuccinate lyase.